The chain runs to 87 residues: DNA-directed RNA polymerase subunit omega (87 aa).

This sequence belongs to the RNA polymerase subunit omega family. As to quaternary structure, the RNAP catalytic core consists of 2 alpha, 1 beta, 1 beta' and 1 omega subunit. When a sigma factor is associated with the core the holoenzyme is formed, which can initiate transcription.

It catalyses the reaction RNA(n) + a ribonucleoside 5'-triphosphate = RNA(n+1) + diphosphate. In terms of biological role, promotes RNA polymerase assembly. Latches the N- and C-terminal regions of the beta' subunit thereby facilitating its interaction with the beta and alpha subunits. This is DNA-directed RNA polymerase subunit omega from Acidothermus cellulolyticus (strain ATCC 43068 / DSM 8971 / 11B).